A 149-amino-acid chain; its full sequence is Transcription factor MafF (149 aa).

The segment at 51-76 (RLKQRRRTLKNRGYAASCRVKRVCQK) is basic motif. In terms of domain architecture, bZIP spans 51–114 (RLKQRRRTLK…DTLRGKYEAL (64 aa)). Residues 79 to 93 (LQKQKMELEWEVDKL) form a leucine-zipper region.

This sequence belongs to the bZIP family. Maf subfamily. Monomer and homo- or heterodimer. In terms of tissue distribution, highly expressed in the ovary, lower expression in the brain, heart and mesenterium.

It is found in the nucleus. In terms of biological role, since it lacks a putative transactivation domain, it may behave as a transcriptional repressor when it dimerizes among itself. May also serve as a transcriptional activator by dimerizing with other (usually larger) basic-zipper proteins and recruiting them to specific DNA-binding sites. May be involved in the cellular stress response. This is Transcription factor MafF (MAFF) from Gallus gallus (Chicken).